The primary structure comprises 913 residues: ER degradation-enhancing alpha-mannosidase-like protein 3 (913 aa).

Positions 1 to 15 (MGCPAVEARRWGDMW) are cleaved as a signal peptide. Residue asparagine 104 is glycosylated (N-linked (GlcNAc...) asparagine). Glutamate 132 acts as the Proton donor in catalysis. Residue asparagine 181 is glycosylated (N-linked (GlcNAc...) asparagine). Residue aspartate 279 is part of the active site. Glutamate 373 acts as the Proton donor in catalysis. Residue glutamate 391 is part of the active site. Ca(2+) is bound at residue threonine 477. A glycan (N-linked (GlcNAc...) asparagine) is linked at asparagine 497. A PA domain is found at 660–766 (LSKHLAGAQG…KEGNIILDAI (107 aa)). Asparagine 797 is a glycosylation site (N-linked (GlcNAc...) asparagine). Residues 823-895 (EESPVSQPEV…NKVQPMESIL (73 aa)) are disordered. The span at 826-839 (PVSQPEVPSSDSPS) shows a compositional bias: low complexity. Over residues 843-866 (RTSERDITPESQEHKTEETEHSPK) the composition is skewed to basic and acidic residues. Positions 910 to 913 (KDEL) match the Prevents secretion from ER motif.

This sequence belongs to the glycosyl hydrolase 47 family. It depends on Ca(2+) as a cofactor.

It is found in the endoplasmic reticulum lumen. The catalysed reaction is N(4)-(alpha-D-Man-(1-&gt;2)-alpha-D-Man-(1-&gt;2)-alpha-D-Man-(1-&gt;3)-[alpha-D-Man-(1-&gt;2)-alpha-D-Man-(1-&gt;3)-[alpha-D-Man-(1-&gt;2)-alpha-D-Man-(1-&gt;6)]-alpha-D-Man-(1-&gt;6)]-beta-D-Man-(1-&gt;4)-beta-D-GlcNAc-(1-&gt;4)-beta-D-GlcNAc)-L-asparaginyl-[protein] (N-glucan mannose isomer 9A1,2,3B1,2,3) + 4 H2O = N(4)-(alpha-D-Man-(1-&gt;3)-[alpha-D-Man-(1-&gt;3)-[alpha-D-Man-(1-&gt;6)]-alpha-D-Man-(1-&gt;6)]-beta-D-Man-(1-&gt;4)-beta-D-GlcNAc-(1-&gt;4)-beta-D-GlcNAc)-L-asparaginyl-[protein] (N-glucan mannose isomer 5A1,2) + 4 beta-D-mannose. It catalyses the reaction N(4)-(alpha-D-Man-(1-&gt;2)-alpha-D-Man-(1-&gt;2)-alpha-D-Man-(1-&gt;3)-[alpha-D-Man-(1-&gt;3)-[alpha-D-Man-(1-&gt;2)-alpha-D-Man-(1-&gt;6)]-alpha-D-Man-(1-&gt;6)]-beta-D-Man-(1-&gt;4)-beta-D-GlcNAc-(1-&gt;4)-beta-D-GlcNAc)-L-asparaginyl-[protein] (N-glucan mannose isomer 8A1,2,3B1,3) + 3 H2O = N(4)-(alpha-D-Man-(1-&gt;3)-[alpha-D-Man-(1-&gt;3)-[alpha-D-Man-(1-&gt;6)]-alpha-D-Man-(1-&gt;6)]-beta-D-Man-(1-&gt;4)-beta-D-GlcNAc-(1-&gt;4)-beta-D-GlcNAc)-L-asparaginyl-[protein] (N-glucan mannose isomer 5A1,2) + 3 beta-D-mannose. It participates in protein modification; protein glycosylation. Functionally, may be involved in endoplasmic reticulum-associated degradation (ERAD). This is ER degradation-enhancing alpha-mannosidase-like protein 3 (edem3) from Xenopus laevis (African clawed frog).